Here is an 84-residue protein sequence, read N- to C-terminus: Large ribosomal subunit protein bL27 (84 aa).

The segment at 1–22 (MAHKKGASSTRNGRDSNAQRLG) is disordered. Residues 7-19 (ASSTRNGRDSNAQ) show a composition bias toward polar residues.

Belongs to the bacterial ribosomal protein bL27 family.

This is Large ribosomal subunit protein bL27 from Streptomyces coelicolor (strain ATCC BAA-471 / A3(2) / M145).